Consider the following 412-residue polypeptide: uncharacterized protein (412 aa).

The Radical SAM core domain maps to 50–264 (EVDIRTAYIN…KSGRRIVIGD (215 aa)). [4Fe-4S] cluster is bound by residues Cys-64, Cys-68, and Cys-71.

Belongs to the radical SAM superfamily. Anaerobic sulfatase-maturating enzyme family. [4Fe-4S] cluster serves as cofactor.

This is an uncharacterized protein from Archaeoglobus fulgidus (strain ATCC 49558 / DSM 4304 / JCM 9628 / NBRC 100126 / VC-16).